A 238-amino-acid polypeptide reads, in one-letter code: Ribonuclease PH (238 aa).

Phosphate is bound by residues Arg-86 and 124-126 (GTR).

It belongs to the RNase PH family. Homohexameric ring arranged as a trimer of dimers.

It catalyses the reaction tRNA(n+1) + phosphate = tRNA(n) + a ribonucleoside 5'-diphosphate. Functionally, phosphorolytic 3'-5' exoribonuclease that plays an important role in tRNA 3'-end maturation. Removes nucleotide residues following the 3'-CCA terminus of tRNAs; can also add nucleotides to the ends of RNA molecules by using nucleoside diphosphates as substrates, but this may not be physiologically important. Probably plays a role in initiation of 16S rRNA degradation (leading to ribosome degradation) during starvation. The chain is Ribonuclease PH from Shigella dysenteriae serotype 1 (strain Sd197).